Reading from the N-terminus, the 275-residue chain is Large ribosomal subunit protein uL2 (275 aa).

Disordered regions lie at residues 38 to 59 (KKHA…GGHK) and 222 to 275 (GSAM…RKQK). 2 stretches are compositionally biased toward basic residues: residues 39-59 (KHAG…GGHK) and 254-275 (MGKK…RKQK).

The protein belongs to the universal ribosomal protein uL2 family. In terms of assembly, part of the 50S ribosomal subunit. Forms a bridge to the 30S subunit in the 70S ribosome.

One of the primary rRNA binding proteins. Required for association of the 30S and 50S subunits to form the 70S ribosome, for tRNA binding and peptide bond formation. It has been suggested to have peptidyltransferase activity; this is somewhat controversial. Makes several contacts with the 16S rRNA in the 70S ribosome. This chain is Large ribosomal subunit protein uL2, found in Herpetosiphon aurantiacus (strain ATCC 23779 / DSM 785 / 114-95).